We begin with the raw amino-acid sequence, 279 residues long: GDT1-like protein 3 (279 aa).

The signal sequence occupies residues 1 to 23 (MDPNPRLLILLVLLAFSATVAVA). The next 6 membrane-spanning stretches (helical) occupy residues 64 to 84 (VGPGLFDALFASLSMILVSEI), 103 to 123 (IVLSGALSALYVMTVLSTGLG), 135 to 155 (TNSAATVLYLFFGLRLLYIAW), 186 to 206 (FFGRFCTPIFLEAFILTFLAE), 224 to 244 (AIGVAVGASLGHTVCTSLAVI), and 258 to 278 (VATIGGVLFLGFSVSSYFYPP).

It belongs to the GDT1 family.

The protein resides in the membrane. This is GDT1-like protein 3 from Oryza sativa subsp. japonica (Rice).